The chain runs to 382 residues: Draxin-A (382 aa).

The first 22 residues, 1 to 22, serve as a signal peptide directing secretion; the sequence is MMSSSWCLPLALLFSTLAVSHS. 3 disordered regions span residues 28-213, 233-252, and 275-297; these read THAK…PPSP, LPTLPPASTKPQKSGRGKMQ, and VDAWPSSRKKDKRRSKNLSSGNV. Residues 73-82 are compositionally biased toward low complexity; it reads RGAKASSGAG. Residues 139-149 show a composition bias toward basic residues; that stretch reads GPRKGRGQGHG. Over residues 190 to 201 the composition is skewed to low complexity; that stretch reads SVSSAAAATSPS. Residues 281-290 show a composition bias toward basic residues; sequence SRKKDKRRSK. Asn291 and Asn296 each carry an N-linked (GlcNAc...) asparagine glycan.

This sequence belongs to the draxin family.

Its subcellular location is the secreted. Chemorepulsive axon guidance protein required for the development of spinal cord and forebrain commissures. Acts as a chemorepulsive guidance protein for commissural axons during development. Able to inhibit or repel neurite outgrowth from dorsal spinal cord. In Salmo salar (Atlantic salmon), this protein is Draxin-A (draxin-A).